We begin with the raw amino-acid sequence, 251 residues long: 2,3-bisphosphoglycerate-dependent phosphoglycerate mutase 2 (251 aa).

Substrate contacts are provided by residues 8 to 15 (RHGESTWN), 21 to 22 (TG), R60, 87 to 90 (ERHY), K98, 114 to 115 (RR), and 183 to 184 (GN). H9 (tele-phosphohistidine intermediate) is an active-site residue. E87 serves as the catalytic Proton donor/acceptor.

The protein belongs to the phosphoglycerate mutase family. BPG-dependent PGAM subfamily. In terms of assembly, homodimer.

The enzyme catalyses (2R)-2-phosphoglycerate = (2R)-3-phosphoglycerate. It functions in the pathway carbohydrate degradation; glycolysis; pyruvate from D-glyceraldehyde 3-phosphate: step 3/5. Functionally, catalyzes the interconversion of 2-phosphoglycerate and 3-phosphoglycerate. In Nitrosospira multiformis (strain ATCC 25196 / NCIMB 11849 / C 71), this protein is 2,3-bisphosphoglycerate-dependent phosphoglycerate mutase 2.